Reading from the N-terminus, the 87-residue chain is Protein Isd11 (87 aa).

Belongs to the complex I LYR family. As to quaternary structure, interacts with IscS; the interaction enhances cysteine desulfurase activity of IscS. Component of a complex, at least composed of IscS, Isd11 and IscU.

The protein resides in the mitochondrion. The protein operates within cofactor biosynthesis; iron-sulfur cluster biosynthesis. In terms of biological role, participates in iron-sulfur cluster formation (ISC) pathway for iron-sulfur (Fe-S) cluster biogenesis. Enhances cysteine desulfurase activity of IscS. This is Protein Isd11 from Plasmodium falciparum (isolate 3D7).